Reading from the N-terminus, the 1033-residue chain is SIT4-associating protein SAP190 (1033 aa).

Disordered stretches follow at residues 32-82 (DQDD…TTES), 147-213 (PEII…QVET), 768-813 (FGND…HDSG), and 828-1033 (ENEE…KEAF). Over residues 158–170 (ILIERDRKDKKED) the composition is skewed to basic and acidic residues. The span at 171–182 (AEEGGDSEETTN) shows a compositional bias: acidic residues. Residues 183 to 195 (DSDHDSGDERSVD) show a composition bias toward basic and acidic residues. Phosphoserine is present on S774. Acidic residues-rich tracts occupy residues 784 to 793 (SEDIIGDTEG) and 828 to 838 (ENEEDYAEYSD). A phosphoserine mark is found at S857, S862, and S892. Over residues 858–879 (DDGKSKSAESEFTDKISEHRDG) the composition is skewed to basic and acidic residues. Residues 909 to 924 (SRSQPSDPKLQDQNIF) show a composition bias toward polar residues. Acidic residues predominate over residues 932–944 (GVGDDDDYMDPND). T990 carries the phosphothreonine modification. S991 carries the phosphoserine modification. Positions 1000 to 1018 (ISSDEEDSEDEDEENDMGN) are enriched in acidic residues.

It belongs to the SAPS family. In terms of assembly, associates with the SIT4 protein phosphatase catalytic subunit in a cell-cycle-dependent manner. Post-translationally, hyperphosphorylated in the absence of SIT4.

The protein resides in the cytoplasm. In terms of biological role, positive regulator of protein phosphatase SIT4. Involved in the general amino acid control (GAAC) response regulated by TOR. Involved in the dephosphorylation of the elongator complex subunit IKI3. This is SIT4-associating protein SAP190 (SAP190) from Saccharomyces cerevisiae (strain AWRI1631) (Baker's yeast).